Consider the following 212-residue polypeptide: NADH-quinone oxidoreductase subunit I (212 aa).

2 consecutive 4Fe-4S ferredoxin-type domains span residues 76–105 and 115–144; these read RLLE…IITD and LNYS…HGDL. The [4Fe-4S] cluster site is built by cysteine 85, cysteine 88, cysteine 91, cysteine 95, cysteine 124, cysteine 127, cysteine 130, and cysteine 134.

Belongs to the complex I 23 kDa subunit family. In terms of assembly, NDH-1 is composed of 14 different subunits. Subunits NuoA, H, J, K, L, M, N constitute the membrane sector of the complex. [4Fe-4S] cluster is required as a cofactor.

The protein localises to the cell inner membrane. It carries out the reaction a quinone + NADH + 5 H(+)(in) = a quinol + NAD(+) + 4 H(+)(out). In terms of biological role, NDH-1 shuttles electrons from NADH, via FMN and iron-sulfur (Fe-S) centers, to quinones in the respiratory chain. The immediate electron acceptor for the enzyme in this species is believed to be ubiquinone. Couples the redox reaction to proton translocation (for every two electrons transferred, four hydrogen ions are translocated across the cytoplasmic membrane), and thus conserves the redox energy in a proton gradient. The protein is NADH-quinone oxidoreductase subunit I of Helicobacter hepaticus (strain ATCC 51449 / 3B1).